We begin with the raw amino-acid sequence, 2475 residues long: MGNRGSSTSSRPPLSSEANLYAKLQDHIQRQTRPFSGGGYFNGGGDKNPVQHIKDYHIDSVSSKAKLRIIEGIIKAISKIGFKVDTKQPIEDILKDIKKQLPDPRAGSTFVKNAEKQETICKMIADAINQEFIDLGQDKLIDTTEGAASICRQIVLYINSLTHGLRAEYLDVHGSIENTLENIKLLSDAIKQLHERMVTEVTKAAPNEEVINAVTMIEAVYRRLLNEQNLQINILTNFIDNILTPTQKELDKLKTDEVDIIKILNDTNSVLGTKNFGKVLSYTLCNLGIAATVANKINKALQRVGLKVEQYLHSKNWAEFDKELDLKRFSGLVSAENIAEFEKAVNLLRQTFNERHKILENNCAKKGGDGEKTPLDKRMEAQRLDRKHILMEFLNKSTQAYNDFLENVKKIGMKLVKEIALTPNITKLRDALSRINDMGTIALDLSLIGFYNNAAAREERETFLIQLTLVKNVLEELAKTDPNFKNLYDSCFRLLQIIDFYTDIVQKKYGGGEDCECTKVGGAALTVEELGLSKAARSQVDLNQAINTFMYYYYVAQIYSNLTHNKQEFQSYEENYATILGDAIAGRLMQLDTEKNARINSPAVDLARGHVGPNPGGAQEVDWKATISAIELEYDVKRRFYRALEGLDLYLKNITKTFVNNIDSIQTVQQMLDGVRIIGRWFTEATGDTLAQVFESFPTSAGNDSNVFTDNAPAGHYYEKVAAEIQQGRGVGTLRPVRASQAKNIRDLIGRSLSNFQALKNIINAFARIGDMLGGEELRQTVPMSPLQIYKTLLEYIQHSALSVGLKNLNQTQIGGQRVALAQTAEEASQRVYLSTVRVNDALSTRWETEDVFFTFMLKSMAAKIFIVLGIYDMFERPEPVYKLIPTRMILGGADELEPEVIPEAAGLYFRLPRLAEFYQKLFSFRDENVQISMLPELEGIFSGLIRVIFMRPIELINIGDYSETEIRQLIKEINVIYQHFNLEYGEQEAVKKALIHFVNEINRRFGVITRTEWEKFQRIVQEARTMNDFGMMNQTNYSILPDEDGYTQSSQLLPSDRFIGPSSQPTPKWRPALYNIDSVDVQTGMLQPNSQWDLVQKFRKQLSEMFEDPSLQQELGKVSYQELIQQATNELKKEHTDKIQIVSKLIQGSESLADTDVNKIFLFHETVITGLNLLSAIYVLLNTFRNNIKALDLDTIQKSIIEWLRETQAANVNRANLIDWLGRRHGDISEIRNPGLVIKANDARLSEVYPDPTTDATAPLDRNLVTETLFAWFTRFVGIPADGAVRPEQELAARYLVDNQRIMQLLLTNIFEMTSSFNKLVQVRFPETSTAHVHLDFTGLISLIDSLMADTKYFLDLLRPHIDKNIIQYYENRSNPGSFYWLEEHLIDKLIKPPTDAGGRPLPGGELGLEGVNQIINKTYILLTKPYNVLQLRGGAQRGNAANIQINNNPEFSERYEQYGRVFSRLVFYDALIENSGLRVEQVALGDFRLSNLIRTNNAQEENALSFWTAVAPRAYANVNDAANNLRRYRLYGSDYGIRNNRSMMMVFNQLVASYIARFYDAPSGKIYLNLINTFANGNFSQAVMELGYAHPDLARDNTAFGHRGDPTEQSVLLLSLGLMLQRLIKDTNRQGLSQHLISTLTEIPIYLKENYRANLPLFNKMFNILISQGELLKQFIQYTKVQLARPNLTALLGANNDSIIYYNNNNVPNTGLTVGQAALRGIGSVFRPDITLMPLGNAQNNTNDVVRKRLIAVINGIIRGSLTLANSAMEVLHELTDHPIYFETEEHFIQNYMSRYNKEPLMPFSLSLYYLRDLRIENNEVYDPLLYPNLESGSPEFKILYGTRKLLGNDPVQLSDMPGVQLIMKNYNETVVAREQITPTRFEHFYIHAIQALRFIINIRSFKTVMTYNENTFGGVNLIGEDRDDKPIITEGIGMNAVYSLRKTLQDVISFVESSYQEEQINNIHKIVSPRSQTRSLGSNRERERIFNLFDMNIMPINVNALMRSIPLANIYNYDYSFEEIACLMYGISAEKVRSLDTAAPQPDVAQVLNIPNRPPMNTREFMLKLLINPYVTVSITQYGNELLFRGNAGYMSRIFRGDNALNMGRPKFLSDQIFNKVLFGSLYPTQFDYDEAGPGLAAGIQRGREQWGQPLSDYINQALHELVRTIRIIPQNIRVLRNIMVKNQLIADLAAIREQLVRMRREVENMVQTPEIQNNPTPEVIAAAQTWTQQYRARVDFLINFIGNAQQPNSLIQLIQNITPLTVRAQLTTVFIRHGLPVPDPDQALQTDDEATQWFMTNIINQPITMIIPFTDLADDLRIFLETMERYVFNVPRWLGPSTGRVARVPVNMAPGNIRYRTSYTENNVLTYIAEQNQEEGPWSIVKQVGVGIQKPALIQIGKDRFDTRLIRNLIFITNIQRLLRLRLNLELSQFRNVLVSPNHIINPSITEYGFSITGPSETFSDKQYDSDIRIL.

The N-myristoyl glycine; by host moiety is linked to residue G2. Positions 2185–2212 form a coiled coil; that stretch reads KNQLIADLAAIREQLVRMRREVENMVQT.

This sequence belongs to the asfivirus polyprotein pp220 family. Post-translationally, the polyprotein is not glycosylated. Specific enzymatic cleavages in vivo by the viral pS273R protease yield mature proteins.

The protein localises to the host cytoplasm. It is found in the host perinuclear region. It localises to the virion. The protein resides in the host nucleus. Functionally, essential for the core assembly. Its myristoyl moiety may function as a membrane-anchoring signal to bind the developing core shell to the inner viral envelope. The structural protein p34 is a component of the virus core shell. In terms of biological role, the structural protein p14 is a component of the virus core shell. Its function is as follows. The structural protein p37 is a component of the virus core shell. Functionally, the structural protein p150 is a component of the virus core shell. This African swine fever virus (isolate Pig/Kenya/KEN-50/1950) (ASFV) protein is Polyprotein pp220.